The chain runs to 94 residues: Ubiquitin-like protein ATG12B (94 aa).

Ala-2 is modified (N-acetylalanine). Gly-94 is covalently cross-linked (Glycyl lysine isopeptide (Gly-Lys) (interchain with K-128 in ATG5)).

This sequence belongs to the ATG12 family. As to expression, ubiquitous.

It is found in the cytoplasm. In terms of biological role, ubiquitin-like protein involved in cytoplasm to vacuole transport (Cvt) and autophagy vesicles formation. Conjugation with ATG5 through a ubiquitin-like conjugating system involving also ATG7 as an E1-like activating enzyme and ATG10 as an E2-like conjugating enzyme, is essential for its function. ATG12/ATG5 conjugate has an essential role in plant nutrient recycling. In Arabidopsis thaliana (Mouse-ear cress), this protein is Ubiquitin-like protein ATG12B (ATG12B).